The following is a 275-amino-acid chain: MGKSLSHLPLHSNKEDGYDGVTSTDNMRNGLVSSEVRNEDGRSGDVSQFPYVEFTGRDSVTCPTCQGTGRIPRGQENQLVALIPYSDQRLRPRRTKLYVMASVFVCLLLSGLAVFFLFPRSIDVKYIGVKSAYVSYDSQKRMIYLNITNTLNITNNNYYSVEVENITAQVQFSKTVIGKARLSNITNIGPLDMKQIDYTVPTVIAEEMSYMYDFCTLPSIKVHNIVLMMQVTVTTAYFGHSEQISQERYQYVDCGRNTTYQLAQSEYLNVLQPQQ.

Residues 1 to 24 (MGKSLSHLPLHSNKEDGYDGVTST) form a disordered region. The N-myristoyl glycine moiety is linked to residue Gly-2. Over 2 to 97 (GKSLSHLPLH…QRLRPRRTKL (96 aa)) the chain is Cytoplasmic. Ser-34 carries the post-translational modification Phosphoserine. A helical transmembrane segment spans residues 98-118 (YVMASVFVCLLLSGLAVFFLF). Residues 119-275 (PRSIDVKYIG…EYLNVLQPQQ (157 aa)) are Lumenal-facing. N-linked (GlcNAc...) asparagine glycans are attached at residues Asn-146, Asn-152, Asn-165, and Asn-184. An intrachain disulfide couples Cys-215 to Cys-254. Asn-257 is a glycosylation site (N-linked (GlcNAc...) asparagine).

This sequence belongs to the TMEM106 family. As to quaternary structure, can form homomers. Interacts (via N-terminus) with MAP6 (via C-terminus). Interacts (via C-terminus) with the vacuolar-type ATPase subunit ATP6AP1. Interacts (via N-terminus) with AP2M1 and CLTC. Interacts with TMEM106C. As to expression, expressed in cortical neurons (at protein level).

The protein localises to the late endosome membrane. Its subcellular location is the lysosome membrane. It localises to the cell membrane. Involved in dendrite morphogenesis and maintenance by regulating lysosomal trafficking. May act as a molecular brake for retrograde transport of late endosomes/lysosomes, possibly via its interaction with MAP6. In neurons, may also play a role in the regulation of lysosomal size and responsiveness to stress. Required for proper lysosomal acidification. Its function is as follows. In neurons, involved in the transport of late endosomes/lysosomes. May be involved in dendrite morphogenesis and maintenance by regulating lysosomal trafficking. May act as a molecular brake for retrograde transport of late endosomes/lysosomes, possibly via its interaction with MAP6. In motoneurons, may mediate the axonal transport of lysosomes and axonal sorting at the initial segment. It remains unclear whether TMEM106B affects the transport of moving lysosomes in the anterograde or retrograde direction in neurites and whether it is particularly important in the sorting of lysosomes in axons or in dendrites. In neurons, may also play a role in the regulation of lysosomal size and responsiveness to stress. Required for proper lysosomal acidification. This Rattus norvegicus (Rat) protein is Transmembrane protein 106B (Tmem106b).